The chain runs to 534 residues: Pentatricopeptide repeat-containing protein At2g20540 (534 aa).

PPR repeat units lie at residues 41–71, 72–106, 108–142, 143–173, 174–208, 209–239, 240–274, 275–305, 306–340, 341–371, and 377–407; these read SSFM…VSNP, NVFL…SFEL, DRFT…GPRF, HVVT…MYER, DVIS…TIVS, WTAM…GIEP, DEIS…GFLK, QTGV…MEGK, DVIS…KVKP, NGIT…MRQD, and KIEH…MPMK. The tract at residues 412 to 487 is type E motif; the sequence is IWGSLLSSCR…TPGGSLIEVN (76 aa). The interval 488-518 is type E(+) motif; it reads NIVQEFVSGDNSKPFWTEISIVLQLFTSHQD.

Belongs to the PPR family. PCMP-E subfamily.

This Arabidopsis thaliana (Mouse-ear cress) protein is Pentatricopeptide repeat-containing protein At2g20540 (PCMP-E78).